The primary structure comprises 714 residues: MTQMSQVQELFHEAAQQDALAQPQPWWKTQLFMWEPVLFGTWDGVFTSCMINIFGVVLFLRTGWLVGNTGVLLGMFLVSFVILVALVTVLSGIGVGERSSIGSGGVYSMISSVLGGQTGGTIGLLYVFGQCVAGAMYITGFAESISDLLGLGNIWAVRGISVAVLLALLGINLAGVKWIIRLQLLLLFLLAVSTLDFVVGSFTHLDPEHGFIGYSPELLQNNTLPDYSPGESFFTVFGVFFPAATGVMAGFNMGGDLREPAASIPLGSLAAVGISWFLYIIFVFLLGAICTREALRYDFLIAEKVSLMGFLFLLGLYISSLASCMGGLYGAPRILQCIAQEKVIPALACLGQGKGPNKTPVAAICLTSLVTMAFVFVGQVNVLAPIVTINFMLTYVAVDYSYFSLSMCSCSLTPVPEPVLREGAEGLHCSEHLLLEKAPSYGSEGPAQRVLEGTLLEFTKDMDQLLQLTRKLESSQPRQGEGNRTPESQKRKSKKATKQTLQDSFLLDLKSPPSFPVEISDRLPAASWEGQESCWNKQTSKSEGTQPEGTYGEQLVPELCNQSESSGEDFFLKSRLQEQDVWRRSTSFYTHMCNPWVSLLGAVGSLLIMFVIQWVYTLVNMGVAAIVYFYIGRASPGLHLGSASNFSFFRWMRSLLLPSCRSLRSPQEQIILAPSLAKVDMEMTQLTQENADFATRDRYHHSSLVNREQLMPHY.

6 helical membrane-spanning segments follow: residues 37–60 (VLFG…VLFL), 72–93 (LLGM…LSGI), 99–116 (SSIG…VLGG), 123–142 (GLLY…TGFA), 154–173 (IWAV…GINL), and 185–205 (LLLF…FTHL). An N-linked (GlcNAc...) asparagine glycan is attached at N221. 5 helical membrane-spanning segments follow: residues 233–254 (FFTV…FNMG), 266–289 (LGSL…LGAI), 309–331 (GFLF…LYGA), 360–377 (PVAA…FVFV), and 383–403 (LAPI…YSYF). Disordered stretches follow at residues 471 to 503 (KLES…TLQD) and 530 to 550 (GQES…PEGT). Positions 533–548 (SCWNKQTSKSEGTQPE) are enriched in polar residues. The next 2 helical transmembrane spans lie at 593–616 (CNPW…QWVY) and 622–643 (GVAA…LGSA).

The protein belongs to the SLC12A transporter family. In terms of tissue distribution, ubiquitous with very low level in normal skin.

The protein resides in the membrane. Cation/chloride cotransporter that may play a role in the control of keratinocyte proliferation. This chain is Solute carrier family 12 member 8 (SLC12A8), found in Homo sapiens (Human).